Reading from the N-terminus, the 375-residue chain is Holliday junction branch migration complex subunit RuvB (375 aa).

Residues 1–50 (MAIVSSKSPDPAERRSQAKTKPSVSEPQDSLVRPQAAPEESQRPEDQIRP) are disordered. The interval 13–209 (ERRSQAKTKP…FGLVQRLRFY (197 aa)) is large ATPase domain (RuvB-L). The segment covering 19–28 (KTKPSVSEPQ) has biased composition (polar residues). The span at 40–49 (ESQRPEDQIR) shows a compositional bias: basic and acidic residues. ATP is bound by residues Ile-48, Arg-49, Gly-90, Lys-93, Thr-94, Thr-95, 156–158 (EDF), Arg-199, Tyr-209, and Arg-246. Thr-94 contributes to the Mg(2+) binding site. The small ATPAse domain (RuvB-S) stretch occupies residues 210–280 (EVEALTDIVQ…IAATALELYN (71 aa)). The tract at residues 283-375 (PCGLDWTDRR…LQQLLTEPET (93 aa)) is head domain (RuvB-H). Residues Arg-338 and Arg-343 each contribute to the DNA site.

This sequence belongs to the RuvB family. In terms of assembly, homohexamer. Forms an RuvA(8)-RuvB(12)-Holliday junction (HJ) complex. HJ DNA is sandwiched between 2 RuvA tetramers; dsDNA enters through RuvA and exits via RuvB. An RuvB hexamer assembles on each DNA strand where it exits the tetramer. Each RuvB hexamer is contacted by two RuvA subunits (via domain III) on 2 adjacent RuvB subunits; this complex drives branch migration. In the full resolvosome a probable DNA-RuvA(4)-RuvB(12)-RuvC(2) complex forms which resolves the HJ.

It localises to the cytoplasm. The catalysed reaction is ATP + H2O = ADP + phosphate + H(+). Functionally, the RuvA-RuvB-RuvC complex processes Holliday junction (HJ) DNA during genetic recombination and DNA repair, while the RuvA-RuvB complex plays an important role in the rescue of blocked DNA replication forks via replication fork reversal (RFR). RuvA specifically binds to HJ cruciform DNA, conferring on it an open structure. The RuvB hexamer acts as an ATP-dependent pump, pulling dsDNA into and through the RuvAB complex. RuvB forms 2 homohexamers on either side of HJ DNA bound by 1 or 2 RuvA tetramers; 4 subunits per hexamer contact DNA at a time. Coordinated motions by a converter formed by DNA-disengaged RuvB subunits stimulates ATP hydrolysis and nucleotide exchange. Immobilization of the converter enables RuvB to convert the ATP-contained energy into a lever motion, pulling 2 nucleotides of DNA out of the RuvA tetramer per ATP hydrolyzed, thus driving DNA branch migration. The RuvB motors rotate together with the DNA substrate, which together with the progressing nucleotide cycle form the mechanistic basis for DNA recombination by continuous HJ branch migration. Branch migration allows RuvC to scan DNA until it finds its consensus sequence, where it cleaves and resolves cruciform DNA. The sequence is that of Holliday junction branch migration complex subunit RuvB from Synechococcus elongatus (strain ATCC 33912 / PCC 7942 / FACHB-805) (Anacystis nidulans R2).